Consider the following 260-residue polypeptide: Snake venom serine protease pallabin (260 aa).

An N-terminal signal peptide occupies residues 1 to 18 (MVLIRVLANLLILQLSYA). Positions 19 to 24 (QKSSKL) are excised as a propeptide. The Peptidase S1 domain occupies 25–251 (VIGGDECNIN…HLDWIENIIA (227 aa)). Cystine bridges form between cysteine 31–cysteine 163, cysteine 50–cysteine 66, cysteine 98–cysteine 258, cysteine 142–cysteine 212, cysteine 174–cysteine 191, and cysteine 202–cysteine 227. Histidine 65 serves as the catalytic Charge relay system. An N-linked (GlcNAc...) asparagine glycan is attached at asparagine 103. Catalysis depends on aspartate 110, which acts as the Charge relay system. The active-site Charge relay system is the serine 206.

This sequence belongs to the peptidase S1 family. Snake venom subfamily. Monomer. As to expression, expressed by the venom gland.

Its subcellular location is the secreted. In terms of biological role, snake venom serine protease that may act in the hemostasis system of the prey. This is Snake venom serine protease pallabin (JZTHR5) from Gloydius halys (Chinese water mocassin).